The sequence spans 380 residues: Erythronate-4-phosphate dehydrogenase (380 aa).

Ser45 and Thr66 together coordinate substrate. NAD(+) is bound by residues Asp146, Thr174, 205-207 (ASR), and Asp231. Arg207 is a catalytic residue. Glu236 is an active-site residue. Residue His253 is the Proton donor of the active site. NAD(+) is bound at residue Gly256. Tyr257 is a substrate binding site.

The protein belongs to the D-isomer specific 2-hydroxyacid dehydrogenase family. PdxB subfamily. In terms of assembly, homodimer.

The protein resides in the cytoplasm. It carries out the reaction 4-phospho-D-erythronate + NAD(+) = (R)-3-hydroxy-2-oxo-4-phosphooxybutanoate + NADH + H(+). Its pathway is cofactor biosynthesis; pyridoxine 5'-phosphate biosynthesis; pyridoxine 5'-phosphate from D-erythrose 4-phosphate: step 2/5. Its function is as follows. Catalyzes the oxidation of erythronate-4-phosphate to 3-hydroxy-2-oxo-4-phosphonooxybutanoate. The chain is Erythronate-4-phosphate dehydrogenase from Pseudomonas fluorescens (strain SBW25).